We begin with the raw amino-acid sequence, 669 residues long: Bestrophin-3 (669 aa).

The Cytoplasmic portion of the chain corresponds to 1-31 (MTVTYSSKVANATFFGFHRLLLKWRGSIYKL). Ca(2+) is bound at residue Ala-10. The chain crosses the membrane as a helical span at residues 32-51 (LYREFIVFAVLYTAISLVYR). The Extracellular portion of the chain corresponds to 52–60 (LLLTGAQKR). Residues 61–82 (YFEKLSIYCDRYAEQIPVTFVL) traverse the membrane as a helical segment. The Cytoplasmic segment spans residues 83 to 237 (GFYVTLVVNR…DWVGIPLVYT (155 aa)). Residues 238-255 (QVVTLAVYTFFFACLIGR) form a helical membrane-spanning segment. Residues 256–274 (QFLDPTKGYVGHDLDLYVP) lie on the Extracellular side of the membrane. A helical membrane pass occupies residues 275–288 (IFTLLQFFFYAGWL). The Cytoplasmic portion of the chain corresponds to 289-669 (KVAEQLINPF…GTPQRPRTWF (381 aa)). Ca(2+)-binding residues include Gln-293, Asn-296, Asp-301, and Asp-304. 4 disordered regions span residues 399-496 (LSTH…TKMP), 533-560 (QPSG…SAST), 591-627 (TSLG…GAGS), and 646-669 (ILEF…RTWF). Over residues 440-451 (NPHRGSPTRKQS) the composition is skewed to basic residues. The segment covering 475 to 492 (RTSTLQSLSPQSSVRSSP) has biased composition (low complexity). Residues 533 to 543 (QPSGTEQQVEP) are compositionally biased toward polar residues. Basic and acidic residues predominate over residues 646-656 (ILEFNNEHTGE).

The protein belongs to the anion channel-forming bestrophin (TC 1.A.46) family. Calcium-sensitive chloride channel subfamily. Expressed in heart. In terms of tissue distribution, expressed in brain, retina/retinal pigment epithelium (RPE) and skeletal muscle. Expressed in acinar cells of parotid glands. Expressed in lung, kidney and testis.

It is found in the cell membrane. It catalyses the reaction chloride(in) = chloride(out). Its function is as follows. Ligand-gated anion channel that allows the movement of chloride monoatomic anions across cell membranes when activated by calcium (Ca2+). Functionally, does not function as calcium-gated chloride channel. In Mus musculus (Mouse), this protein is Bestrophin-3 (Best3).